The chain runs to 148 residues: Cystatin-C (148 aa).

A signal peptide spans 1 to 28; the sequence is MARSLGVPLLLLAALVVALALAVSPAAG. A Secondary area of contact motif is present at residues 83–87; the sequence is QIVSG. 2 disulfide bridges follow: Cys101/Cys111 and Cys125/Cys145.

It belongs to the cystatin family.

It localises to the secreted. Its function is as follows. This is a thiol proteinase inhibitor. The polypeptide is Cystatin-C (CST3) (Oryctolagus cuniculus (Rabbit)).